Here is a 550-residue protein sequence, read N- to C-terminus: Solute carrier family 22 member 11 (550 aa).

At 1–10 (MAFSKLLEQA) the chain is on the cytoplasmic side. Residues 11-31 (GGVGLFQTLQVLTFILPCLMI) form a helical membrane-spanning segment. The Extracellular portion of the chain corresponds to 32–142 (PSQMLLENFS…DLVCSSQGLK (111 aa)). N-linked (GlcNAc...) asparagine glycans are attached at residues Asn-39, Asn-56, and Asn-99. A helical transmembrane segment spans residues 143–163 (PLSQSIFMSGILVGSFIWGLL). Residues 164–174 (SYRFGRKPMLS) are Cytoplasmic-facing. A helical membrane pass occupies residues 175–195 (WCCLQLAVAGTSTIFAPTFVI). Residues 196–200 (YCGLR) are Extracellular-facing. The chain crosses the membrane as a helical span at residues 201–221 (FVAAFGMAGIFLSSLTLMVEW). Topologically, residues 222 to 231 (TTTSRRAVTM) are cytoplasmic. Residues 232-252 (TVVGCAFSAGQAALGGLAFAL) traverse the membrane as a helical segment. Residues 253–256 (RDWR) are Extracellular-facing. Residues 257–277 (TLQLAASVPFFAISLISWWLP) form a helical membrane-spanning segment. Residues 278 to 346 (ESARWLIIKG…FCVPVLRWRS (69 aa)) are Cytoplasmic-facing. A helical transmembrane segment spans residues 347 to 367 (CAMLVVNFSLLISYYGLVFDL). The Extracellular portion of the chain corresponds to 368–378 (QSLGRDIFLLQ). The chain crosses the membrane as a helical span at residues 379–399 (ALFGAVDFLGRATTALLLSFL). At 400 to 402 (GRR) the chain is on the cytoplasmic side. A helical membrane pass occupies residues 403–423 (TIQAGSQAMAGLAILANMLVP). Over 424–430 (QDLQTLR) the chain is Extracellular. The helical transmembrane segment at 431 to 451 (VVFAVLGKGCFGISLTCLTIY) threads the bilayer. The Cytoplasmic portion of the chain corresponds to 452-463 (KAELFPTPVRMT). Residues 464–484 (ADGILHTVGRLGAMMGPLILM) form a helical membrane-spanning segment. At 485 to 490 (SRQALP) the chain is on the extracellular side. Residues 491–511 (LLPPLLYGVISIASSLVVLFF) form a helical membrane-spanning segment. The Cytoplasmic segment spans residues 512–550 (LPETQGLPLPDTIQDLESQKSTAAQGNRQEAVTVESTSL). The segment at 531–550 (KSTAAQGNRQEAVTVESTSL) is disordered.

This sequence belongs to the major facilitator (TC 2.A.1) superfamily. Organic cation transporter (TC 2.A.1.19) family. N-glycosylated. Contains several complex-type N-glycans. Expressed in placental trophoblasts, syncytiotrophoblast and cytotrophoblast. Also located in the proximal tubules in kidneys.

The protein localises to the cell membrane. It localises to the apical cell membrane. Its subcellular location is the basal cell membrane. The enzyme catalyses estrone 3-sulfate(out) + glutarate(in) = estrone 3-sulfate(in) + glutarate(out). It catalyses the reaction dehydroepiandrosterone 3-sulfate(out) = dehydroepiandrosterone 3-sulfate(in). The catalysed reaction is prostaglandin F2alpha(out) = prostaglandin F2alpha(in). It carries out the reaction prostaglandin E2(out) = prostaglandin E2(in). Its function is as follows. Antiporter that mediates the transport of conjugated steroids and other specific organic anions at the basal membrane of syncytiotrophoblast and at the apical membrane of proximal tubule epithelial cells, in exchange for anionic compounds. May be responsible for placental absorption of fetal-derived steroid sulfates such as estrone sulfate (E1S) and the steroid hormone precursor dehydroepiandrosterone sulfate (DHEA-S), as well as clearing waste products and xenobiotics from the fetus. Maybe also be involved in placental urate homeostasis. Facilitates the renal reabsorption of organic anions such as urate and derived steroid sulfates. Organic anion glutarate acts as conteranion for E1S renal uptake. Possible transport mode may also include DHEA-S/E1S exchange. Also interacts with inorganic anions such as chloride and hydroxyl ions, therefore possible transport modes may include E1S/Cl(-), E1S/OH(-), urate/Cl(-) and urate/OH(-). Also mediates the transport of prostaglandin E2 (PGE2) and prostaglandin F2-alpha (PGF2-alpha) and may be involved in their renal excretion. Also able to uptake anionic drugs, diuretics, bile salts and ochratoxin A. Mediates the unidirectional efflux of glutamate and aspartate. Glutamate efflux down its transmembrane gradient may drive SLC22A11/OAT4-mediated placental uptake of E1S. In Homo sapiens (Human), this protein is Solute carrier family 22 member 11.